Reading from the N-terminus, the 225-residue chain is uncharacterized protein (225 aa).

This is an uncharacterized protein from Dictyostelium discoideum (Social amoeba).